The chain runs to 902 residues: Chitin synthase 3 (902 aa).

A compositionally biased stretch (basic and acidic residues) spans 1–15 (MAYNRLDDDYFDNRR). Residues 1-68 (MAYNRLDDDY…MGPGRHTPSD (68 aa)) are disordered. Residues 19 to 30 (NRPPPHRTPSPG) are compositionally biased toward pro residues. Asn-80 carries N-linked (GlcNAc...) asparagine glycosylation. Positions 104 to 161 (HHDAYYNPTYTPTPNEAQTPYGEPGYEHDGRPLLPQQDSYGQYSDNPQQQQQQQGGLK) are disordered. Composition is skewed to polar residues over residues 111–121 (PTYTPTPNEAQ) and 139–150 (QQDSYGQYSDNP). A run of 9 helical transmembrane segments spans residues 449 to 469 (SAFGFISVLPGAFSAYRYIAL), 547 to 567 (RWLNGSFFAAIYAIAHFYQFF), 577 to 597 (IAFFIEFTFNTVNMIFAWFAI), 623 to 643 (ILGVCFEWLYGVSLITCFVLA), 656 to 676 (LAMIYFWAIIFCYLLFAAVFI), 699 to 719 (VVVTLILSIMSTYGIWLVASL), 731 to 751 (LVQYMLLSPTFTNVLNVYAFC), 830 to 850 (VVVLLWMVTNFGLAAVVLSTA), and 874 to 894 (VVLYSVAALSGFKFIGAMWFL).

This sequence belongs to the chitin synthase family. Class II subfamily.

It localises to the cell membrane. It catalyses the reaction [(1-&gt;4)-N-acetyl-beta-D-glucosaminyl](n) + UDP-N-acetyl-alpha-D-glucosamine = [(1-&gt;4)-N-acetyl-beta-D-glucosaminyl](n+1) + UDP + H(+). In terms of biological role, polymerizes chitin, a structural polymer of the cell wall and septum, by transferring the sugar moiety of UDP-GlcNAc to the non-reducing end of the growing chitin polymer. CHS1 and CHS3 have compensatory functions in cell wall modifications in responses to stresses. Might function as a negative regulator on expression of other CHS genes. This is Chitin synthase 3 from Pyricularia oryzae (strain 70-15 / ATCC MYA-4617 / FGSC 8958) (Rice blast fungus).